Consider the following 198-residue polypeptide: Photosystem I assembly protein Ycf4 (198 aa).

The interval 1–20 (MTASTTINKGDSPNGDSSAS) is disordered. A run of 2 helical transmembrane segments spans residues 38–58 (WASIVTLGASGFLLAGISSYL) and 78–98 (LVMGLYGTAGLLLASYLWLAI).

Belongs to the Ycf4 family.

Its subcellular location is the cellular thylakoid membrane. Functionally, seems to be required for the assembly of the photosystem I complex. This is Photosystem I assembly protein Ycf4 from Trichormus variabilis (strain ATCC 29413 / PCC 7937) (Anabaena variabilis).